The primary structure comprises 350 residues: Probable dual-specificity RNA methyltransferase RlmN (350 aa).

E91 serves as the catalytic Proton acceptor. Positions 97 to 327 (YHHGNSVCIS…VTIRREMGRD (231 aa)) constitute a Radical SAM core domain. C104 and C332 are oxidised to a cystine. [4Fe-4S] cluster contacts are provided by C111, C115, and C118. Residues 158 to 159 (GE), S190, 213 to 215 (SLH), and N289 each bind S-adenosyl-L-methionine. The active-site S-methylcysteine intermediate is C332.

The protein belongs to the radical SAM superfamily. RlmN family. Requires [4Fe-4S] cluster as cofactor.

It localises to the cytoplasm. The enzyme catalyses adenosine(2503) in 23S rRNA + 2 reduced [2Fe-2S]-[ferredoxin] + 2 S-adenosyl-L-methionine = 2-methyladenosine(2503) in 23S rRNA + 5'-deoxyadenosine + L-methionine + 2 oxidized [2Fe-2S]-[ferredoxin] + S-adenosyl-L-homocysteine. The catalysed reaction is adenosine(37) in tRNA + 2 reduced [2Fe-2S]-[ferredoxin] + 2 S-adenosyl-L-methionine = 2-methyladenosine(37) in tRNA + 5'-deoxyadenosine + L-methionine + 2 oxidized [2Fe-2S]-[ferredoxin] + S-adenosyl-L-homocysteine. In terms of biological role, specifically methylates position 2 of adenine 2503 in 23S rRNA and position 2 of adenine 37 in tRNAs. The polypeptide is Probable dual-specificity RNA methyltransferase RlmN (Lachnospira eligens (strain ATCC 27750 / DSM 3376 / VPI C15-48 / C15-B4) (Eubacterium eligens)).